A 209-amino-acid chain; its full sequence is Ras-related protein Rab-2-A (209 aa).

13-21 lines the GTP pocket; it reads GDTGVGKSC. The short motif at 35 to 43 is the Effector region element; the sequence is HDLTIGVEF. Residues 61–65, 119–122, and 149–151 contribute to the GTP site; these read DTAGQ, NKCD, and SAK. Residues Cys-207 and Cys-208 are each lipidated (S-geranylgeranyl cysteine).

This sequence belongs to the small GTPase superfamily. Rab family.

The protein localises to the endoplasmic reticulum membrane. Its subcellular location is the golgi apparatus membrane. Functionally, protein transport. Probably involved in vesicular traffic. This Zea mays (Maize) protein is Ras-related protein Rab-2-A (RAB2A).